A 244-amino-acid polypeptide reads, in one-letter code: Dehydration-responsive element-binding protein 2E (244 aa).

The segment at 1–25 (MEKEDNGSKQSSSASVVSSRRRRRV) is disordered. The Nuclear localization signal signature appears at 20–46 (RRRRRVVEPVEATLQRWEEEGLARARR). A DNA-binding region (AP2/ERF) is located at residues 69 to 134 (RFRGVRQRVW…YGPYARLNFP (66 aa)).

It belongs to the AP2/ERF transcription factor family. ERF subfamily. As to expression, expressed in xylem tissues, stigma, anthers and region where sepals and petals attach the peduncle.

The protein localises to the nucleus. In terms of biological role, transcriptional activator that binds specifically to the DNA sequence 5'-[AG]CCGAC-3'. Binding to the C-repeat/DRE element mediates abscisic acid-inducible transcription. Involved in the regulation of plant development and tolerance to abiotic stresses. This chain is Dehydration-responsive element-binding protein 2E (DREB2E), found in Arabidopsis thaliana (Mouse-ear cress).